The chain runs to 389 residues: Capreomycidine synthase (389 aa).

Residue Lys-230 is modified to N6-(pyridoxal phosphate)lysine.

This sequence belongs to the class-II pyridoxal-phosphate-dependent aminotransferase family. The cofactor is pyridoxal 5'-phosphate.

It catalyses the reaction (2S,3S)-hydroxyarginine = (2S,3R)-capreomycidine + H2O. It participates in antibiotic biosynthesis. Its function is as follows. Involved in the biosynthesis of capreomycidine, an unusual amino acid used by non-ribosomal peptide synthases (NRPS) to make the tuberactinomycin class of peptide antibiotic such as viomycin and capreomycin. Catalyzes the dehydration of the C3 hydroxyl of (3S)-hydroxy-(2S)-arginine and the intramolecular cyclization to yield (2S,3R)-capreomycidine. This chain is Capreomycidine synthase, found in Streptomyces vinaceus.